Here is a 171-residue protein sequence, read N- to C-terminus: MDRTQKTEWVGSLQGTLGDVGLVVVTHYSGLTVAEMTDLRGKMRAAGASFKVTKNRLTKLALAGTEFESIADLFVGPTAIAVSRDPVAAAKVVADYAKANDKLKILGGSLGSLRLDVNGVKALATLPSLDELRGKLLGMLSTPATRIAGVLQAPAGQLARVLKAKADKDAA.

The protein belongs to the universal ribosomal protein uL10 family. As to quaternary structure, part of the ribosomal stalk of the 50S ribosomal subunit. The N-terminus interacts with L11 and the large rRNA to form the base of the stalk. The C-terminus forms an elongated spine to which L12 dimers bind in a sequential fashion forming a multimeric L10(L12)X complex.

In terms of biological role, forms part of the ribosomal stalk, playing a central role in the interaction of the ribosome with GTP-bound translation factors. In Paramagnetospirillum magneticum (strain ATCC 700264 / AMB-1) (Magnetospirillum magneticum), this protein is Large ribosomal subunit protein uL10.